A 359-amino-acid polypeptide reads, in one-letter code: Alanine racemase, biosynthetic (359 aa).

K34 acts as the Proton acceptor; specific for D-alanine in catalysis. K34 carries the post-translational modification N6-(pyridoxal phosphate)lysine. Residue R129 participates in substrate binding. Y255 functions as the Proton acceptor; specific for L-alanine in the catalytic mechanism. Position 303 (M303) interacts with substrate.

The protein belongs to the alanine racemase family. Pyridoxal 5'-phosphate is required as a cofactor.

The enzyme catalyses L-alanine = D-alanine. The protein operates within amino-acid biosynthesis; D-alanine biosynthesis; D-alanine from L-alanine: step 1/1. It functions in the pathway cell wall biogenesis; peptidoglycan biosynthesis. Functionally, catalyzes the interconversion of L-alanine and D-alanine. Provides the D-alanine required for cell wall biosynthesis. The protein is Alanine racemase, biosynthetic (alr) of Escherichia coli O6:H1 (strain CFT073 / ATCC 700928 / UPEC).